We begin with the raw amino-acid sequence, 373 residues long: Dynein regulatory complex protein 9 (373 aa).

Residues 145 to 200 (EQAMKETIEREKNTTAAVRQLRNDLREEKLDHEEKMKEKKKGLSTLKEQLKALKMD) adopt a coiled-coil conformation. Residues 336–365 (RAQAAVIIQAWWRGHKVRMVMSGGGKKGAK) enclose the IQ domain.

The protein belongs to the DRC9 family. In terms of assembly, component of the nexin-dynein regulatory complex (N-DRC).

The protein localises to the cytoplasm. Its subcellular location is the cytoskeleton. It localises to the flagellum axoneme. Component of the nexin-dynein regulatory complex (N-DRC), a key regulator of ciliary/flagellar motility which maintains the alignment and integrity of the distal axoneme and regulates microtubule sliding in motile axonemes. The polypeptide is Dynein regulatory complex protein 9 (Chlamydomonas reinhardtii (Chlamydomonas smithii)).